We begin with the raw amino-acid sequence, 301 residues long: Homoserine O-acetyltransferase (301 aa).

Cys142 (acyl-thioester intermediate) is an active-site residue. The substrate site is built by Lys163 and Ser192. Residue His235 is the Proton acceptor of the active site. Glu237 is an active-site residue. Arg249 lines the substrate pocket.

Belongs to the MetA family.

The protein resides in the cytoplasm. It catalyses the reaction L-homoserine + acetyl-CoA = O-acetyl-L-homoserine + CoA. The protein operates within amino-acid biosynthesis; L-methionine biosynthesis via de novo pathway; O-acetyl-L-homoserine from L-homoserine: step 1/1. In terms of biological role, transfers an acetyl group from acetyl-CoA to L-homoserine, forming acetyl-L-homoserine. The polypeptide is Homoserine O-acetyltransferase (Bacillus thuringiensis subsp. konkukian (strain 97-27)).